Reading from the N-terminus, the 258-residue chain is UDP-2,3-diacylglucosamine hydrolase (258 aa).

Mn(2+)-binding residues include Asp15, His17, Asp48, Asn88, and His123. Asn88–Arg89 lines the substrate pocket. 5 residues coordinate substrate: Asp131, Ser169, Asn173, Lys176, and His204. Mn(2+) is bound by residues His204 and His206.

It belongs to the LpxH family. Requires Mn(2+) as cofactor.

It is found in the cell inner membrane. The catalysed reaction is UDP-2-N,3-O-bis[(3R)-3-hydroxytetradecanoyl]-alpha-D-glucosamine + H2O = 2-N,3-O-bis[(3R)-3-hydroxytetradecanoyl]-alpha-D-glucosaminyl 1-phosphate + UMP + 2 H(+). The protein operates within glycolipid biosynthesis; lipid IV(A) biosynthesis; lipid IV(A) from (3R)-3-hydroxytetradecanoyl-[acyl-carrier-protein] and UDP-N-acetyl-alpha-D-glucosamine: step 4/6. Its function is as follows. Hydrolyzes the pyrophosphate bond of UDP-2,3-diacylglucosamine to yield 2,3-diacylglucosamine 1-phosphate (lipid X) and UMP by catalyzing the attack of water at the alpha-P atom. Involved in the biosynthesis of lipid A, a phosphorylated glycolipid that anchors the lipopolysaccharide to the outer membrane of the cell. The protein is UDP-2,3-diacylglucosamine hydrolase of Bordetella pertussis (strain Tohama I / ATCC BAA-589 / NCTC 13251).